Here is a 377-residue protein sequence, read N- to C-terminus: Nitric oxide reductase FlRd-NAD(+) reductase (377 aa).

This sequence belongs to the FAD-dependent oxidoreductase family. FAD serves as cofactor.

It localises to the cytoplasm. It catalyses the reaction 2 reduced [nitric oxide reductase rubredoxin domain] + NAD(+) + H(+) = 2 oxidized [nitric oxide reductase rubredoxin domain] + NADH. Its pathway is nitrogen metabolism; nitric oxide reduction. In terms of biological role, one of at least two accessory proteins for anaerobic nitric oxide (NO) reductase. Reduces the rubredoxin moiety of NO reductase. This is Nitric oxide reductase FlRd-NAD(+) reductase from Shigella dysenteriae serotype 1 (strain Sd197).